A 100-amino-acid chain; its full sequence is uncharacterized protein (100 aa).

This is an uncharacterized protein from Acheta domesticus (House cricket).